The chain runs to 214 residues: Orotate phosphoribosyltransferase (214 aa).

5-phospho-alpha-D-ribose 1-diphosphate is bound by residues arginine 125, lysine 126, lysine 129, histidine 131, and 151–159 (EDTSTTGNS). Orotate-binding residues include threonine 155 and arginine 183.

It belongs to the purine/pyrimidine phosphoribosyltransferase family. PyrE subfamily. As to quaternary structure, homodimer. It depends on Mg(2+) as a cofactor.

It carries out the reaction orotidine 5'-phosphate + diphosphate = orotate + 5-phospho-alpha-D-ribose 1-diphosphate. The protein operates within pyrimidine metabolism; UMP biosynthesis via de novo pathway; UMP from orotate: step 1/2. In terms of biological role, catalyzes the transfer of a ribosyl phosphate group from 5-phosphoribose 1-diphosphate to orotate, leading to the formation of orotidine monophosphate (OMP). The protein is Orotate phosphoribosyltransferase of Tropheryma whipplei (strain TW08/27) (Whipple's bacillus).